A 131-amino-acid polypeptide reads, in one-letter code: Snaclec coagulation factor IX/factor X-binding protein subunit A (131 aa).

The C-type lectin domain maps to 1–131 (DCLPGWSSHE…EEPQRFTCEI (131 aa)). 3 disulfide bridges follow: Cys-2-Cys-13, Cys-30-Cys-129, and Cys-104-Cys-121. Ca(2+) is bound by residues Ser-41, Glu-43, and Glu-47. Glu-130 contacts Ca(2+).

This sequence belongs to the snaclec family. In terms of assembly, heterodimer of subunits A and B; disulfide-linked. As to expression, expressed by the venom gland.

The protein resides in the secreted. Its function is as follows. Anticoagulant protein which binds to coagulation factor IX (F9) and coagulation factor X (F10) in the presence of calcium. It may bind the gamma-carboxyglutamic acid-domain regions of factors with a 1 to 1 stoichiometry. The dissociation constant (K(d)) are 6.6 nM for factor IX (F9) and 125 nM for factor X (F10). Does not bind carbohydrates. The protein is Snaclec coagulation factor IX/factor X-binding protein subunit A of Echis carinatus (Saw-scaled viper).